A 309-amino-acid chain; its full sequence is Malate dehydrogenase (309 aa).

Residues Gly10–Gly15 and Asp34 each bind NAD(+). Substrate-binding residues include Arg83 and Arg89. Residues Asn96 and Val119–Asn121 each bind NAD(+). Asn121 and Arg152 together coordinate substrate. Residue His176 is the Proton acceptor of the active site.

The protein belongs to the LDH/MDH superfamily. MDH type 3 family.

The catalysed reaction is (S)-malate + NAD(+) = oxaloacetate + NADH + H(+). Catalyzes the reversible oxidation of malate to oxaloacetate. The polypeptide is Malate dehydrogenase (Desulforudis audaxviator (strain MP104C)).